Here is a 134-residue protein sequence, read N- to C-terminus: Putative capsid protein (134 aa).

In terms of assembly, homodimer.

Its subcellular location is the virion. In terms of biological role, self-assembles to form a helical, filamentous nucleocapsid. The capsid proteins wrap around the DNA and maintain it in an A-form by non-specific desolvation and specific coordination of the DNA phosphate groups by positively charged residues. This certainly protects the viral DNA under conditions such as the extreme desiccation of its host. In Sulfolobus islandicus rod-shaped virus 1 (SIRV-1), this protein is Putative capsid protein.